Consider the following 544-residue polypeptide: Chaperonin GroEL (544 aa).

ATP-binding positions include T30–P33, K51, D87–T91, G415, and D495.

This sequence belongs to the chaperonin (HSP60) family. In terms of assembly, forms a cylinder of 14 subunits composed of two heptameric rings stacked back-to-back. Interacts with the co-chaperonin GroES.

It localises to the cytoplasm. The enzyme catalyses ATP + H2O + a folded polypeptide = ADP + phosphate + an unfolded polypeptide.. Functionally, together with its co-chaperonin GroES, plays an essential role in assisting protein folding. The GroEL-GroES system forms a nano-cage that allows encapsulation of the non-native substrate proteins and provides a physical environment optimized to promote and accelerate protein folding. The polypeptide is Chaperonin GroEL (Bartonella bacilliformis (strain ATCC 35685 / KC583 / Herrer 020/F12,63)).